The sequence spans 572 residues: Probable transporter MCH1 (572 aa).

The span at 1–29 (MSSSAPDDTQASRLDADQISTRSSSYASD) shows a compositional bias: polar residues. The tract at residues 1 to 39 (MSSSAPDDTQASRLDADQISTRSSSYASDNDTDSTETRI) is disordered. N-linked (GlcNAc...) asparagine glycosylation is present at asparagine 30. 10 helical membrane-spanning segments follow: residues 50–70 (LLAF…VVFS), 89–109 (AVAI…GYIC), 116–136 (PLAL…AGVY), 159–179 (FLML…MAAV), 193–213 (GLAL…LSQA), 232–252 (VFRF…LGTF), 335–355 (LAFL…GTII), 426–446 (FMAF…SGLV), 459–479 (LVGA…TIIW), and 488–508 (YGLI…VYSA). A glycan (N-linked (GlcNAc...) asparagine) is linked at asparagine 515. A helical transmembrane segment spans residues 539–559 (PTYWAETITVWIAVGLLLWAW).

It belongs to the major facilitator superfamily.

The protein localises to the vacuole membrane. Probable transporter. This is Probable transporter MCH1 (MCH1) from Gibberella zeae (strain ATCC MYA-4620 / CBS 123657 / FGSC 9075 / NRRL 31084 / PH-1) (Wheat head blight fungus).